We begin with the raw amino-acid sequence, 307 residues long: Agmatinase (307 aa).

6 residues coordinate Mn(2+): His128, Asp151, His153, Asp155, Asp232, and Asp234.

The protein belongs to the arginase family. Agmatinase subfamily. Mn(2+) serves as cofactor.

The catalysed reaction is agmatine + H2O = urea + putrescine. It participates in amine and polyamine biosynthesis; putrescine biosynthesis via agmatine pathway; putrescine from agmatine: step 1/1. Its function is as follows. Catalyzes the formation of putrescine from agmatine. This Photorhabdus laumondii subsp. laumondii (strain DSM 15139 / CIP 105565 / TT01) (Photorhabdus luminescens subsp. laumondii) protein is Agmatinase.